Consider the following 530-residue polypeptide: Berberine bridge enzyme-like 4 (530 aa).

An N-terminal signal peptide occupies residues 1-19 (MKGTLSVLCLVLLVSVLEA). Cys32 and Cys95 are disulfide-bonded. A glycan (N-linked (GlcNAc...) asparagine) is linked at Asn52. The FAD-binding PCMH-type domain occupies 73–247 (NYRKLLAIVA…LSWKINLVDV (175 aa)). Residues 110-172 (HDYEGLSYMS…QTLAFPAGVC (63 aa)) constitute a cross-link (6-(S-cysteinyl)-8alpha-(pros-histidyl)-FAD (His-Cys)). N-linked (GlcNAc...) asparagine glycans are attached at residues Asn257, Asn292, Asn341, and Asn441.

Belongs to the oxygen-dependent FAD-linked oxidoreductase family. FAD is required as a cofactor. In terms of processing, the FAD cofactor is bound via a bicovalent 6-S-cysteinyl, 8alpha-N1-histidyl FAD linkage.

The protein resides in the secreted. It localises to the cell wall. Its function is as follows. Probable flavin-dependent oxidoreductase. This chain is Berberine bridge enzyme-like 4, found in Arabidopsis thaliana (Mouse-ear cress).